A 346-amino-acid chain; its full sequence is Protease inhibitor Egf1.5b (346 aa).

An N-terminal signal peptide occupies residues 1-28 (MYIDTGIMSNNIFLFAFFALVGLTRIEA). One can recognise a TIL domain in the interval 52-104 (CRENEHYNSTRIECEDECNDRNNKLCYRFQQFCWCNEGYIRNSSHICVKLEDC).

This sequence belongs to the polydnaviridae EGF-like motif protein family. Interacts with host PAP1, PAP3 and SPH2.

Counteracts the host humoral immune response by inhibiting the processing and the amidolytic activity of host PAP1 and PAP3. Thereby, melanization of host hemolymph, normally producing several reactive intermediates toxic for viruses, is deregulated and proper immune response cannot occur. The chain is Protease inhibitor Egf1.5b (O5) from Microplitis demolitor (Parasitoid wasp).